Consider the following 215-residue polypeptide: MKPFTQHTGLVCPLDRVNVDTDQIIPKQFLKSIKRTGFGPNLFDEWRYLDAGQPGQDNSKRPINSDFVLNFPRYRGASVLLARDNFGCGSSREHAAWALDEYGFRTVIAPSFADIFFNNSFKNGLLPLVLNKVEVDALFAQCQVTEGYTLTVDLAAQQVITLDGTTYAFQIDTFRKHCLLNGLDDIGLTLQHAEAIRAFEATHRIRQPWLFAPLR.

Belongs to the LeuD family. LeuD type 1 subfamily. As to quaternary structure, heterodimer of LeuC and LeuD.

The catalysed reaction is (2R,3S)-3-isopropylmalate = (2S)-2-isopropylmalate. It functions in the pathway amino-acid biosynthesis; L-leucine biosynthesis; L-leucine from 3-methyl-2-oxobutanoate: step 2/4. Functionally, catalyzes the isomerization between 2-isopropylmalate and 3-isopropylmalate, via the formation of 2-isopropylmaleate. This is 3-isopropylmalate dehydratase small subunit from Xylella fastidiosa (strain M23).